Consider the following 1037-residue polypeptide: Exportin-T (1037 aa).

This sequence belongs to the exportin family.

The protein localises to the nucleus. It is found in the cytoplasm. In terms of biological role, tRNA nucleus export receptor which facilitates tRNA translocation across the nuclear pore complex. Involved in pre-tRNA splicing, probably by affecting the interaction of pre-tRNA with splicing endonuclease. This is Exportin-T (los1) from Neosartorya fischeri (strain ATCC 1020 / DSM 3700 / CBS 544.65 / FGSC A1164 / JCM 1740 / NRRL 181 / WB 181) (Aspergillus fischerianus).